A 57-amino-acid polypeptide reads, in one-letter code: Potassium channel toxin alpha-KTx 26.3 (57 aa).

The signal sequence occupies residues 1–15 (MSGLSVFILIALVLS). Residues 16–24 (VIIDVLNNS) constitute a propeptide that is removed on maturation. Cystine bridges form between Cys30–Cys48, Cys34–Cys53, and Cys38–Cys55.

The protein belongs to the short scorpion toxin superfamily. Potassium channel inhibitor family. Alpha-KTx 26 subfamily. Expressed by the venom gland.

It is found in the secreted. In terms of biological role, recombinant toxin that reversibly inhibits the potassium current of mKv1.3/KCNA3 channel stably expressed in COS7 cells (IC(50)=150 nM). The sequence is that of Potassium channel toxin alpha-KTx 26.3 from Mesobuthus gibbosus (Mediterranean checkered scorpion).